The primary structure comprises 563 residues: Adenine deaminase (563 aa).

It belongs to the metallo-dependent hydrolases superfamily. Adenine deaminase family. The cofactor is Mn(2+).

The enzyme catalyses adenine + H2O + H(+) = hypoxanthine + NH4(+). The polypeptide is Adenine deaminase (Brucella anthropi (strain ATCC 49188 / DSM 6882 / CCUG 24695 / JCM 21032 / LMG 3331 / NBRC 15819 / NCTC 12168 / Alc 37) (Ochrobactrum anthropi)).